A 272-amino-acid chain; its full sequence is Bis(5'-nucleosyl)-tetraphosphatase, symmetrical (272 aa).

The protein belongs to the Ap4A hydrolase family.

The catalysed reaction is P(1),P(4)-bis(5'-adenosyl) tetraphosphate + H2O = 2 ADP + 2 H(+). Hydrolyzes diadenosine 5',5'''-P1,P4-tetraphosphate to yield ADP. In Chromohalobacter salexigens (strain ATCC BAA-138 / DSM 3043 / CIP 106854 / NCIMB 13768 / 1H11), this protein is Bis(5'-nucleosyl)-tetraphosphatase, symmetrical.